Here is a 232-residue protein sequence, read N- to C-terminus: Phosphatidylserine decarboxylase proenzyme (232 aa).

Serine 190 (schiff-base intermediate with substrate; via pyruvic acid) is an active-site residue. A Pyruvic acid (Ser); by autocatalysis modification is found at serine 190.

Belongs to the phosphatidylserine decarboxylase family. PSD-A subfamily. In terms of assembly, heterodimer of a large membrane-associated beta subunit and a small pyruvoyl-containing alpha subunit. Pyruvate serves as cofactor. In terms of processing, is synthesized initially as an inactive proenzyme. Formation of the active enzyme involves a self-maturation process in which the active site pyruvoyl group is generated from an internal serine residue via an autocatalytic post-translational modification. Two non-identical subunits are generated from the proenzyme in this reaction, and the pyruvate is formed at the N-terminus of the alpha chain, which is derived from the carboxyl end of the proenzyme. The post-translation cleavage follows an unusual pathway, termed non-hydrolytic serinolysis, in which the side chain hydroxyl group of the serine supplies its oxygen atom to form the C-terminus of the beta chain, while the remainder of the serine residue undergoes an oxidative deamination to produce ammonia and the pyruvoyl prosthetic group on the alpha chain.

It is found in the cell membrane. The enzyme catalyses a 1,2-diacyl-sn-glycero-3-phospho-L-serine + H(+) = a 1,2-diacyl-sn-glycero-3-phosphoethanolamine + CO2. Its pathway is phospholipid metabolism; phosphatidylethanolamine biosynthesis; phosphatidylethanolamine from CDP-diacylglycerol: step 2/2. In terms of biological role, catalyzes the formation of phosphatidylethanolamine (PtdEtn) from phosphatidylserine (PtdSer). This Cereibacter sphaeroides (strain ATCC 17023 / DSM 158 / JCM 6121 / CCUG 31486 / LMG 2827 / NBRC 12203 / NCIMB 8253 / ATH 2.4.1.) (Rhodobacter sphaeroides) protein is Phosphatidylserine decarboxylase proenzyme.